We begin with the raw amino-acid sequence, 236 residues long: MVNNINWVKLPVILDRLLRHPLLTDLNLETAIQYTLDFISAMGLPNVYVDKIETIDIKEYRGELPCDLISINQVRLHKNGIALRAMTDNFNAYPTHDHKEGDWYERGEPSFKTQGRVIFTSIKHEKVDISYKAIMLDDEGLPLIPDNPIFLKTLELYIKKEWFTILFDMGKISPAVLNNTQQEYAFKAGQCNNEFVIPSVSEMEAITNMWNQLIPRVTEFRRGFKNLGDKEYIRVH.

In terms of assembly, homododecamer.

Its subcellular location is the virion. Its function is as follows. Forms the tail multi-ring barrel with ring protein 2, ring protein 3 and ring protein 4. The polypeptide is Ring protein 1 (Bacteroides intestinalis (Bacteroides phage PhiCrAss001)).